The chain runs to 159 residues: MQQGWLSNWLVKHKVVHRSLGFDHRGIETLQIKAGDWDSIAVILYVYGYNYLRSQCAYDVAPGGSLASVYHLTRIQYGIDNPEEVCIKVFAQKDNPRIPSVFWIWRSADFQERESYDMVGISYDNHPRLKRILMPESWVGWPLRKDYITPNFYEIQDAH.

It belongs to the complex I 30 kDa subunit family. NDH is composed of at least 16 different subunits, 5 of which are encoded in the nucleus.

Its subcellular location is the plastid. The protein resides in the chloroplast thylakoid membrane. It carries out the reaction a plastoquinone + NADH + (n+1) H(+)(in) = a plastoquinol + NAD(+) + n H(+)(out). It catalyses the reaction a plastoquinone + NADPH + (n+1) H(+)(in) = a plastoquinol + NADP(+) + n H(+)(out). Its function is as follows. NDH shuttles electrons from NAD(P)H:plastoquinone, via FMN and iron-sulfur (Fe-S) centers, to quinones in the photosynthetic chain and possibly in a chloroplast respiratory chain. The immediate electron acceptor for the enzyme in this species is believed to be plastoquinone. Couples the redox reaction to proton translocation, and thus conserves the redox energy in a proton gradient. This chain is NAD(P)H-quinone oxidoreductase subunit J, chloroplastic, found in Brachypodium distachyon (Purple false brome).